A 100-amino-acid polypeptide reads, in one-letter code: MFAVIETGGKQYLVKEGSIIKVEKLEAEEKKEVEINKVICISNSGLSYSSNATVKAEVLEQCRGEKIIIFKKKRRKNYRRKTGHRQYITVLRINEISLQK.

Belongs to the bacterial ribosomal protein bL21 family. As to quaternary structure, part of the 50S ribosomal subunit. Contacts protein L20.

In terms of biological role, this protein binds to 23S rRNA in the presence of protein L20. In Wolbachia pipientis wMel, this protein is Large ribosomal subunit protein bL21.